The following is a 164-amino-acid chain: MAKNSNKVRKNTNKENNFKRLAENRYAKFQYAISETIEAGIELLGTEVKSIRNGKANLRDGYCSFRDGEILLLNVHISPHKNVGSFFNHDPLRNRKLLLHKKEIIKLKSNTEKKGMTIVPLSMYLKGSWIKLTLGVGKGKKLHDKRQDEKQKSIKKEINSVLKR.

A disordered region spans residues 143–164 (HDKRQDEKQKSIKKEINSVLKR). A compositionally biased stretch (basic and acidic residues) spans 145–158 (KRQDEKQKSIKKEI).

It belongs to the SmpB family.

It localises to the cytoplasm. Functionally, required for rescue of stalled ribosomes mediated by trans-translation. Binds to transfer-messenger RNA (tmRNA), required for stable association of tmRNA with ribosomes. tmRNA and SmpB together mimic tRNA shape, replacing the anticodon stem-loop with SmpB. tmRNA is encoded by the ssrA gene; the 2 termini fold to resemble tRNA(Ala) and it encodes a 'tag peptide', a short internal open reading frame. During trans-translation Ala-aminoacylated tmRNA acts like a tRNA, entering the A-site of stalled ribosomes, displacing the stalled mRNA. The ribosome then switches to translate the ORF on the tmRNA; the nascent peptide is terminated with the 'tag peptide' encoded by the tmRNA and targeted for degradation. The ribosome is freed to recommence translation, which seems to be the essential function of trans-translation. The sequence is that of SsrA-binding protein from Prochlorococcus marinus (strain MIT 9312).